A 159-amino-acid chain; its full sequence is Ribosomal RNA large subunit methyltransferase H (159 aa).

Positions 76 and 108 each coordinate S-adenosyl-L-methionine.

This sequence belongs to the RNA methyltransferase RlmH family. In terms of assembly, homodimer.

Its subcellular location is the cytoplasm. It carries out the reaction pseudouridine(1915) in 23S rRNA + S-adenosyl-L-methionine = N(3)-methylpseudouridine(1915) in 23S rRNA + S-adenosyl-L-homocysteine + H(+). Functionally, specifically methylates the pseudouridine at position 1915 (m3Psi1915) in 23S rRNA. The chain is Ribosomal RNA large subunit methyltransferase H from Limosilactobacillus reuteri (strain DSM 20016) (Lactobacillus reuteri).